Consider the following 495-residue polypeptide: UDP-glycosyltransferase 73C25 (495 aa).

Residue 23–26 (GHMI) participates in UDP-alpha-D-glucose binding. Histidine 24 serves as the catalytic Proton acceptor. Catalysis depends on aspartate 129, which acts as the Charge relay. UDP-alpha-D-glucose-binding positions include 355–358 (WSPQ), 373–381 (HCGWNSTLE), and 397–398 (DQ).

The protein belongs to the UDP-glycosyltransferase family.

In terms of biological role, catalyzes the transfer of a glucose (Glc) moiety from UDP-Glc to the C-28 carboxylic group of oleanolate 3-O-beta-D-glucoside to form oleanolate 3,28-O-beta-D-diglucoside. This Barbarea vulgaris (Yellow rocket) protein is UDP-glycosyltransferase 73C25.